A 101-amino-acid chain; its full sequence is Chaperone modulatory protein CbpM (101 aa).

It belongs to the CbpM family.

Interacts with CbpA and inhibits both the DnaJ-like co-chaperone activity and the DNA binding activity of CbpA. Together with CbpA, modulates the activity of the DnaK chaperone system. Does not inhibit the co-chaperone activity of DnaJ. This chain is Chaperone modulatory protein CbpM, found in Salmonella agona (strain SL483).